Reading from the N-terminus, the 134-residue chain is Early E3B 14.9 kDa protein (134 aa).

The N-terminal stretch at 1–19 is a signal peptide; the sequence is MQAMLPVILILLLPCIALA. The chain crosses the membrane as a helical span at residues 54–78; that stretch reads YWIVIVGIINILSCTFFSITIYPTF.

This sequence belongs to the adenoviridae E3_14 family. In terms of processing, phosphorylated on serine; O-glycosylated, but not N-glycosylated.

The protein resides in the host membrane. Its function is as follows. Down-regulates the EGF receptor and prevents cytolysis by TNF. The sequence is that of Early E3B 14.9 kDa protein from Homo sapiens (Human).